A 733-amino-acid chain; its full sequence is Microtubule-associated protein tau (733 aa).

Residues 1 to 16 are compositionally biased toward basic and acidic residues; sequence MADPRQEFDTMEDHAG. A disordered region spans residues 1-548; the sequence is MADPRQEFDT…PVPMPDLKNV (548 aa). A2 carries the post-translational modification N-acetylalanine. A Phosphotyrosine; by FYN modification is found at Y18. K33 is covalently cross-linked (Glycyl lysine isopeptide (Lys-Gly) (interchain with G-Cter in ubiquitin)). S35 and S50 each carry phosphoserine. The span at 50 to 60 shows a compositional bias: polar residues; it reads SETSDAKSTPT. Residues T58, T60, and T100 each carry the phosphothreonine modification. Residue R115 is modified to Omega-N-methylarginine. A compositionally biased stretch (polar residues) spans 126–137; sequence SDWTRQQVSSMS. Over residues 157–172 the composition is skewed to basic and acidic residues; that stretch reads RPEDIEKSHPASELLR. At S188 the chain carries Phosphoserine. The segment covering 189 to 202 has biased composition (acidic residues); the sequence is EEEVDEDLTVDESS. The segment covering 203–212 has biased composition (polar residues); sequence QDSPPSQASL. Composition is skewed to basic and acidic residues over residues 270 to 294 and 354 to 366; these read EEGH…KEQD and ASKD…EKKA. The segment covering 413-427 has biased composition (polar residues); it reads KHVSSVTPRNGSPGT. A Phosphothreonine modification is found at T445. At R447 the chain carries Omega-N-methylarginine. S451 carries the post-translational modification Phosphoserine. Position 455 is an N6,N6-dimethyllysine; alternate (K455). K455 bears the N6-acetyllysine; alternate mark. T461, T467, and T468 each carry phosphothreonine. Position 470 is a phosphoserine (S470). Position 473 is a phosphothreonine (T473). Phosphoserine occurs at positions 477, 483, and 487. The span at 479 to 506 shows a compositional bias: low complexity; sequence EPPKSGERSGYSSPGSPGTPGSRSRTPS. Residue Y489 is modified to Phosphotyrosine. Phosphoserine is present on residues S490, S491, and S494. Phosphothreonine is present on residues T497 and T504. The residue at position 506 (S506) is a Phosphoserine. T509 bears the Phosphothreonine mark. Position 517 is an N6-acetyllysine (K517). T523 is subject to Phosphothreonine. 3 positions are modified to phosphoserine: S527, S529, and S531. 4 Tau/MAP repeats span residues 536–566, 567–597, 598–628, and 629–660; these read QTAP…GGGK, VQII…GGGS, VQIV…GGGQ, and VEVK…GGGN. A Glycyl lysine isopeptide (Lys-Gly) (interchain with G-Cter in ubiquitin) cross-link involves residue K546. The residue at position 551 (K551) is an N6-acetyllysine; alternate. K551 is subject to N6-methyllysine; alternate. K551 participates in a covalent cross-link: Glycyl lysine isopeptide (Lys-Gly) (interchain with G-Cter in ubiquitin); alternate. A Phosphoserine; by MARK1, BRSK1, BRSK2 and PHK modification is found at S554. A Glycyl lysine isopeptide (Lys-Gly) (interchain with G-Cter in ubiquitin) cross-link involves residue K559. An N6-acetyllysine; alternate modification is found at K573. K573 participates in a covalent cross-link: Glycyl lysine isopeptide (Lys-Gly) (interchain with G-Cter in ubiquitin); alternate. S577 and S581 each carry phosphoserine. K582 carries the post-translational modification N6-acetyllysine. A disulfide bond links C583 and C614. S585 bears the Phosphoserine mark. Residue K590 is modified to N6-acetyllysine; alternate. K590 participates in a covalent cross-link: Glycyl lysine isopeptide (Lys-Gly) (interchain with G-Cter in ubiquitin); alternate. The residue at position 597 (S597) is a Phosphoserine. K603 carries the post-translational modification N6,N6-dimethyllysine; alternate. K603, K609, and K613 each carry N6-acetyllysine; alternate. Residues K603, K609, and K613 each participate in a glycyl lysine isopeptide (Lys-Gly) (interchain with G-Cter in ubiquitin); alternate cross-link. S616 carries the post-translational modification Phosphoserine. 3 positions are modified to N6-acetyllysine; alternate: K623, K635, and K639. Residues K623, K635, and K639 each participate in a glycyl lysine isopeptide (Lys-Gly) (interchain with G-Cter in ubiquitin); alternate cross-link. Residue R641 is modified to Omega-N-methylarginine. S644 is modified (phosphoserine). A Glycyl lysine isopeptide (Lys-Gly) (interchain with G-Cter in ubiquitin) cross-link involves residue K645. A Phosphoserine modification is found at S648. K661 is modified (N6-acetyllysine; alternate). K661 participates in a covalent cross-link: Glycyl lysine isopeptide (Lys-Gly) (interchain with G-Cter in ubiquitin); alternate. K667 participates in a covalent cross-link: Glycyl lysine isopeptide (Lys-Gly) (interchain with G-Cter in ubiquitin). The residue at position 677 (K677) is an N6-acetyllysine; alternate. K677 participates in a covalent cross-link: Glycyl lysine isopeptide (Lys-Gly) (interchain with G-Cter in ubiquitin); alternate. Y686 is subject to Phosphotyrosine. The residue at position 688 (S688) is a Phosphoserine. A disordered region spans residues 690 to 709; sequence VVSGDTSPRHLSNVSSTGSI. S692 bears the Phosphoserine; alternate mark. S692 carries an O-linked (GlcNAc...) serine; alternate glycan. Positions 693 to 708 are enriched in polar residues; sequence GDTSPRHLSNVSSTGS. Phosphothreonine is present on T695. Phosphoserine is present on residues S696, S701, S708, and S714. T719 bears the Phosphothreonine mark.

In terms of assembly, interacts with MARK1, MARK2, MARK3 and MARK4. Interacts with SQSTM1 when polyubiquitinated. Interacts with PSMC2 through SQSTM1. Interacts with FKBP4. Binds to CSNK1D. Interacts with SGK1. Interacts with EPM2A; the interaction dephosphorylates MAPT at Ser-369. Interacts with PIN1. Interacts with LRRK2. Interacts with LRP1, leading to endocytosis; this interaction is reduced in the presence of LRPAP1/RAP. Polyubiquitinated. Requires functional TRAF6 and may provoke SQSTM1-dependent degradation by the proteasome. Post-translationally, phosphorylation at various serine and threonine residues in S-P or T-P motifs by proline-directed protein kinases (PDPK1, CDK1, CDK5, GSK3, MAPK) (a few sites per protein in interphase, more in mitosis), and at serine residues in K-X-G-S motifs by MAP/microtubule affinity-regulating kinase (MARK1, MARK2, MARK3, MARK4), causing detachment from microtubules, and their disassembly. Phosphorylated by PHK. Dephosphorylation at several serine and threonine residues by the serine/threonine phosphatase PPP5C. Phosphorylation at Ser-554 by BRSK1 and BRSK2 in neurons affects ability to bind microtubules and plays a role in neuron polarization. Phosphorylation at Ser-188 by SGK1 mediates microtubule depolymerization and neurite formation in hippocampal neurons. In terms of tissue distribution, expressed in neurons and at a lower level in the liver and kidney. Isoform PNS-tau is expressed in the peripheral nervous system while the others are expressed in the central nervous system.

It localises to the cytoplasm. Its subcellular location is the cytosol. The protein localises to the cell membrane. It is found in the cytoskeleton. The protein resides in the cell projection. It localises to the axon. Its subcellular location is the dendrite. The protein localises to the secreted. Functionally, promotes microtubule assembly and stability, and might be involved in the establishment and maintenance of neuronal polarity. The C-terminus binds axonal microtubules while the N-terminus binds neural plasma membrane components, suggesting that tau functions as a linker protein between both. Axonal polarity is predetermined by tau localization (in the neuronal cell) in the domain of the cell body defined by the centrosome. The short isoforms allow plasticity of the cytoskeleton whereas the longer isoforms may preferentially play a role in its stabilization. This chain is Microtubule-associated protein tau, found in Mus musculus (Mouse).